The primary structure comprises 488 residues: Bifunctional protein HldE (488 aa).

Residues 1–330 form a ribokinase region; the sequence is MIDFDGLSNA…RNILPPASLA (330 aa). An ATP-binding site is contributed by 205 to 208; sequence NSKE. The active site involves aspartate 275. Residues 358–488 form a cytidylyltransferase region; sequence FTNGCFDILH…TSLVKRAGGA (131 aa).

It in the N-terminal section; belongs to the carbohydrate kinase PfkB family. This sequence in the C-terminal section; belongs to the cytidylyltransferase family. As to quaternary structure, homodimer.

The catalysed reaction is D-glycero-beta-D-manno-heptose 7-phosphate + ATP = D-glycero-beta-D-manno-heptose 1,7-bisphosphate + ADP + H(+). The enzyme catalyses D-glycero-beta-D-manno-heptose 1-phosphate + ATP + H(+) = ADP-D-glycero-beta-D-manno-heptose + diphosphate. The protein operates within nucleotide-sugar biosynthesis; ADP-L-glycero-beta-D-manno-heptose biosynthesis; ADP-L-glycero-beta-D-manno-heptose from D-glycero-beta-D-manno-heptose 7-phosphate: step 1/4. It functions in the pathway nucleotide-sugar biosynthesis; ADP-L-glycero-beta-D-manno-heptose biosynthesis; ADP-L-glycero-beta-D-manno-heptose from D-glycero-beta-D-manno-heptose 7-phosphate: step 3/4. Catalyzes the phosphorylation of D-glycero-D-manno-heptose 7-phosphate at the C-1 position to selectively form D-glycero-beta-D-manno-heptose-1,7-bisphosphate. In terms of biological role, catalyzes the ADP transfer from ATP to D-glycero-beta-D-manno-heptose 1-phosphate, yielding ADP-D-glycero-beta-D-manno-heptose. The polypeptide is Bifunctional protein HldE (Nitrobacter winogradskyi (strain ATCC 25391 / DSM 10237 / CIP 104748 / NCIMB 11846 / Nb-255)).